Reading from the N-terminus, the 473-residue chain is Bifunctional protein HldE (473 aa).

Positions 1 to 317 (MTHGLPHFTS…LQQALHPRAI (317 aa)) are ribokinase. 195 to 198 (NLAE) contributes to the ATP binding site. The active site involves Asp-264. Positions 343–473 (MTNGCFDILH…SQIIDIIRKN (131 aa)) are cytidylyltransferase.

It in the N-terminal section; belongs to the carbohydrate kinase PfkB family. The protein in the C-terminal section; belongs to the cytidylyltransferase family. Homodimer.

The enzyme catalyses D-glycero-beta-D-manno-heptose 7-phosphate + ATP = D-glycero-beta-D-manno-heptose 1,7-bisphosphate + ADP + H(+). It carries out the reaction D-glycero-beta-D-manno-heptose 1-phosphate + ATP + H(+) = ADP-D-glycero-beta-D-manno-heptose + diphosphate. Its pathway is nucleotide-sugar biosynthesis; ADP-L-glycero-beta-D-manno-heptose biosynthesis; ADP-L-glycero-beta-D-manno-heptose from D-glycero-beta-D-manno-heptose 7-phosphate: step 1/4. The protein operates within nucleotide-sugar biosynthesis; ADP-L-glycero-beta-D-manno-heptose biosynthesis; ADP-L-glycero-beta-D-manno-heptose from D-glycero-beta-D-manno-heptose 7-phosphate: step 3/4. Its function is as follows. Catalyzes the phosphorylation of D-glycero-D-manno-heptose 7-phosphate at the C-1 position to selectively form D-glycero-beta-D-manno-heptose-1,7-bisphosphate. Functionally, catalyzes the ADP transfer from ATP to D-glycero-beta-D-manno-heptose 1-phosphate, yielding ADP-D-glycero-beta-D-manno-heptose. The polypeptide is Bifunctional protein HldE (Nitrosococcus oceani (strain ATCC 19707 / BCRC 17464 / JCM 30415 / NCIMB 11848 / C-107)).